Consider the following 1387-residue polypeptide: DNA-directed RNA polymerase subunit beta (1387 aa).

This sequence belongs to the RNA polymerase beta chain family. The RNAP catalytic core consists of 2 alpha, 1 beta, 1 beta' and 1 omega subunit. When a sigma factor is associated with the core the holoenzyme is formed, which can initiate transcription.

The catalysed reaction is RNA(n) + a ribonucleoside 5'-triphosphate = RNA(n+1) + diphosphate. In terms of biological role, DNA-dependent RNA polymerase catalyzes the transcription of DNA into RNA using the four ribonucleoside triphosphates as substrates. In Xanthomonas campestris pv. campestris (strain ATCC 33913 / DSM 3586 / NCPPB 528 / LMG 568 / P 25), this protein is DNA-directed RNA polymerase subunit beta.